The following is a 500-amino-acid chain: Bifunctional protein GlmU (500 aa).

Residues methionine 1 to arginine 242 form a pyrophosphorylase region. UDP-N-acetyl-alpha-D-glucosamine-binding positions include leucine 10 to glycine 13, lysine 24, glutamine 81, and glycine 86 to threonine 87. Aspartate 112 is a binding site for Mg(2+). The UDP-N-acetyl-alpha-D-glucosamine site is built by glycine 151, glutamate 167, asparagine 182, and asparagine 240. A Mg(2+)-binding site is contributed by asparagine 240. A linker region spans residues valine 243–alanine 263. The interval glycine 264–glutamine 500 is N-acetyltransferase. The UDP-N-acetyl-alpha-D-glucosamine site is built by arginine 345 and lysine 363. Histidine 375 (proton acceptor) is an active-site residue. The UDP-N-acetyl-alpha-D-glucosamine site is built by tyrosine 378 and asparagine 389. Residues alanine 392, asparagine 398 to tyrosine 399, serine 417, and alanine 435 contribute to the acetyl-CoA site. A disordered region spans residues alanine 472–glutamine 500. Over residues histidine 482–glutamine 500 the composition is skewed to basic and acidic residues.

The protein in the N-terminal section; belongs to the N-acetylglucosamine-1-phosphate uridyltransferase family. In the C-terminal section; belongs to the transferase hexapeptide repeat family. In terms of assembly, homotrimer. Requires Mg(2+) as cofactor.

Its subcellular location is the cytoplasm. It carries out the reaction alpha-D-glucosamine 1-phosphate + acetyl-CoA = N-acetyl-alpha-D-glucosamine 1-phosphate + CoA + H(+). The catalysed reaction is N-acetyl-alpha-D-glucosamine 1-phosphate + UTP + H(+) = UDP-N-acetyl-alpha-D-glucosamine + diphosphate. The protein operates within nucleotide-sugar biosynthesis; UDP-N-acetyl-alpha-D-glucosamine biosynthesis; N-acetyl-alpha-D-glucosamine 1-phosphate from alpha-D-glucosamine 6-phosphate (route II): step 2/2. Its pathway is nucleotide-sugar biosynthesis; UDP-N-acetyl-alpha-D-glucosamine biosynthesis; UDP-N-acetyl-alpha-D-glucosamine from N-acetyl-alpha-D-glucosamine 1-phosphate: step 1/1. It functions in the pathway bacterial outer membrane biogenesis; LPS lipid A biosynthesis. Catalyzes the last two sequential reactions in the de novo biosynthetic pathway for UDP-N-acetylglucosamine (UDP-GlcNAc). The C-terminal domain catalyzes the transfer of acetyl group from acetyl coenzyme A to glucosamine-1-phosphate (GlcN-1-P) to produce N-acetylglucosamine-1-phosphate (GlcNAc-1-P), which is converted into UDP-GlcNAc by the transfer of uridine 5-monophosphate (from uridine 5-triphosphate), a reaction catalyzed by the N-terminal domain. In Rhodococcus jostii (strain RHA1), this protein is Bifunctional protein GlmU.